A 334-amino-acid chain; its full sequence is Beta-ketoacyl-[acyl-carrier-protein] synthase III (334 aa).

Residues Cys-114 and His-253 contribute to the active site. An ACP-binding region spans residues Gln-254–Arg-258. Asn-283 is an active-site residue.

This sequence belongs to the thiolase-like superfamily. FabH family. As to quaternary structure, homodimer.

The protein localises to the cytoplasm. It carries out the reaction malonyl-[ACP] + acetyl-CoA + H(+) = 3-oxobutanoyl-[ACP] + CO2 + CoA. It participates in lipid metabolism; fatty acid biosynthesis. Its function is as follows. Catalyzes the condensation reaction of fatty acid synthesis by the addition to an acyl acceptor of two carbons from malonyl-ACP. Catalyzes the first condensation reaction which initiates fatty acid synthesis and may therefore play a role in governing the total rate of fatty acid production. Possesses both acetoacetyl-ACP synthase and acetyl transacylase activities. Its substrate specificity determines the biosynthesis of branched-chain and/or straight-chain of fatty acids. The chain is Beta-ketoacyl-[acyl-carrier-protein] synthase III from Campylobacter concisus (strain 13826).